Reading from the N-terminus, the 352-residue chain is Protein-glutamate methylesterase/protein-glutamine glutaminase 2 (352 aa).

Positions 1 to 116 constitute a Response regulatory domain; the sequence is MIVDDSAIVR…KDFIQDAASD (116 aa). D50 bears the 4-aspartylphosphate mark. One can recognise a CheB-type methylesterase domain in the interval 159–351; it reads SKTTEHVVAI…QEIMRYAHLK (193 aa). Active-site residues include S171, H197, and D293.

This sequence belongs to the CheB family. Post-translationally, phosphorylated by CheA. Phosphorylation of the N-terminal regulatory domain activates the methylesterase activity.

It localises to the cytoplasm. It catalyses the reaction [protein]-L-glutamate 5-O-methyl ester + H2O = L-glutamyl-[protein] + methanol + H(+). The enzyme catalyses L-glutaminyl-[protein] + H2O = L-glutamyl-[protein] + NH4(+). Involved in chemotaxis. Part of a chemotaxis signal transduction system that modulates chemotaxis in response to various stimuli. Catalyzes the demethylation of specific methylglutamate residues introduced into the chemoreceptors (methyl-accepting chemotaxis proteins or MCP) by CheR. Also mediates the irreversible deamidation of specific glutamine residues to glutamic acid. The polypeptide is Protein-glutamate methylesterase/protein-glutamine glutaminase 2 (Shewanella denitrificans (strain OS217 / ATCC BAA-1090 / DSM 15013)).